Consider the following 420-residue polypeptide: Glutaryl-CoA dehydrogenase, mitochondrial (420 aa).

125-126 (RS) is a binding site for substrate. FAD is bound by residues 164-167 (FGLT), serine 173, and 198-200 (WIT). Serine 173 contacts substrate. Substrate contacts are provided by residues 273–277 (FSCLN) and arginine 280. Glutamate 400 functions as the Proton acceptor in the catalytic mechanism. Positions 402 and 420 each coordinate FAD.

It belongs to the acyl-CoA dehydrogenase family. FAD serves as cofactor.

It localises to the mitochondrion matrix. It catalyses the reaction glutaryl-CoA + oxidized [electron-transfer flavoprotein] + 2 H(+) = (2E)-butenoyl-CoA + reduced [electron-transfer flavoprotein] + CO2. Its pathway is amino-acid metabolism; lysine degradation. It functions in the pathway amino-acid metabolism; tryptophan metabolism. The sequence is that of Glutaryl-CoA dehydrogenase, mitochondrial (gcdh) from Dictyostelium discoideum (Social amoeba).